The following is a 1030-amino-acid chain: Germ cell nuclear acidic protein (1030 aa).

Disordered regions lie at residues 1-59 (MADH…TEDT), 196-245 (EWNG…TQLA), 266-361 (KRLA…VSSI), 375-433 (TMES…EQFL), 457-594 (LKRS…DLTY), and 699-764 (KLGI…PVAS). A compositionally biased stretch (basic and acidic residues) spans 20–33 (APKDHPEKRNDQKT). 2 stretches are compositionally biased toward polar residues: residues 298 to 316 (EPNT…TIHN) and 329 to 349 (ETSS…STSG). The segment covering 505 to 516 (LRTNQTPLNSTR) has biased composition (polar residues). 2 stretches are compositionally biased toward basic and acidic residues: residues 541-553 (NHID…KLID) and 578-594 (DSDK…DLTY). The span at 720-748 (TPKTAPPKGTAPPKTSAPPKVSTPPKSTK) shows a compositional bias: low complexity.

Belongs to the serine-aspartate repeat-containing protein (SDr) family.

Its subcellular location is the cytoplasm. The protein localises to the chromosome. Its function is as follows. May play a role in DNA-protein cross-links (DPCs) clearance, ensuring the genomic stability by protecting germ cells and early embryos from various sources of damage. Limits replication stress and DNA double-strand breaks. The polypeptide is Germ cell nuclear acidic protein (Drosophila melanogaster (Fruit fly)).